Here is a 171-residue protein sequence, read N- to C-terminus: Adenine phosphoribosyltransferase (171 aa).

The protein belongs to the purine/pyrimidine phosphoribosyltransferase family. As to quaternary structure, homodimer.

The protein localises to the cytoplasm. It catalyses the reaction AMP + diphosphate = 5-phospho-alpha-D-ribose 1-diphosphate + adenine. It functions in the pathway purine metabolism; AMP biosynthesis via salvage pathway; AMP from adenine: step 1/1. Its function is as follows. Catalyzes a salvage reaction resulting in the formation of AMP, that is energically less costly than de novo synthesis. This Halalkalibacterium halodurans (strain ATCC BAA-125 / DSM 18197 / FERM 7344 / JCM 9153 / C-125) (Bacillus halodurans) protein is Adenine phosphoribosyltransferase.